A 221-amino-acid polypeptide reads, in one-letter code: MIIAIDGPSASGKSSIARELGVRLNYKFISSGHLYRIITLIAQRSLMNSCDFISEDSLLNLILENDISFNNSTFLLNGENVENQILNDKIDFQVSFYSSYVGIRNIVNKKLREVVKFSDDNYIIEGRDITTVVFPESEFKIYLDASVKVRALRRYKQRNGNETLEELERTLKRRDDVDKKKQYGKLKLSKGVFYLDTSYKGLDDVCNIIIEKFNLKKVRER.

An ATP-binding site is contributed by 7–15; the sequence is GPSASGKSS.

The protein belongs to the cytidylate kinase family. Type 1 subfamily.

It localises to the cytoplasm. It carries out the reaction CMP + ATP = CDP + ADP. It catalyses the reaction dCMP + ATP = dCDP + ADP. This Borreliella burgdorferi (strain ZS7) (Borrelia burgdorferi) protein is Cytidylate kinase.